The chain runs to 271 residues: Acyl-[acyl-carrier-protein]--UDP-N-acetylglucosamine O-acyltransferase (271 aa).

The protein belongs to the transferase hexapeptide repeat family. LpxA subfamily. As to quaternary structure, homotrimer.

The protein resides in the cytoplasm. The catalysed reaction is a (3R)-hydroxyacyl-[ACP] + UDP-N-acetyl-alpha-D-glucosamine = a UDP-3-O-[(3R)-3-hydroxyacyl]-N-acetyl-alpha-D-glucosamine + holo-[ACP]. Its pathway is glycolipid biosynthesis; lipid IV(A) biosynthesis; lipid IV(A) from (3R)-3-hydroxytetradecanoyl-[acyl-carrier-protein] and UDP-N-acetyl-alpha-D-glucosamine: step 1/6. Involved in the biosynthesis of lipid A, a phosphorylated glycolipid that anchors the lipopolysaccharide to the outer membrane of the cell. This Rhizobium rhizogenes (strain K84 / ATCC BAA-868) (Agrobacterium radiobacter) protein is Acyl-[acyl-carrier-protein]--UDP-N-acetylglucosamine O-acyltransferase.